Reading from the N-terminus, the 227-residue chain is Cytochrome c oxidase subunit 2 (227 aa).

Over 1-14 the chain is Mitochondrial intermembrane; that stretch reads MAYPFQLGLQDATS. The chain crosses the membrane as a helical span at residues 15–45; sequence PIMEELLHFHDHTLMIVFLISSLVLYIISLM. Topologically, residues 46–59 are mitochondrial matrix; that stretch reads LTTKLTHTSTMDAQ. The chain crosses the membrane as a helical span at residues 60–87; sequence EVETVWTILPAIILILIALPSLRILYMM. Residues 88–227 lie on the Mitochondrial intermembrane side of the membrane; that stretch reads DEINNPSLTV…YFETWSAVMV (140 aa). 6 residues coordinate Cu cation: His-161, Cys-196, Glu-198, Cys-200, His-204, and Met-207. Glu-198 lines the Mg(2+) pocket. A Phosphotyrosine modification is found at Tyr-218.

This sequence belongs to the cytochrome c oxidase subunit 2 family. In terms of assembly, component of the cytochrome c oxidase (complex IV, CIV), a multisubunit enzyme composed of 14 subunits. The complex is composed of a catalytic core of 3 subunits MT-CO1, MT-CO2 and MT-CO3, encoded in the mitochondrial DNA, and 11 supernumerary subunits COX4I, COX5A, COX5B, COX6A, COX6B, COX6C, COX7A, COX7B, COX7C, COX8 and NDUFA4, which are encoded in the nuclear genome. The complex exists as a monomer or a dimer and forms supercomplexes (SCs) in the inner mitochondrial membrane with NADH-ubiquinone oxidoreductase (complex I, CI) and ubiquinol-cytochrome c oxidoreductase (cytochrome b-c1 complex, complex III, CIII), resulting in different assemblies (supercomplex SCI(1)III(2)IV(1) and megacomplex MCI(2)III(2)IV(2)). Found in a complex with TMEM177, COA6, COX18, COX20, SCO1 and SCO2. Interacts with TMEM177 in a COX20-dependent manner. Interacts with COX20. Interacts with COX16. Cu cation is required as a cofactor.

The protein resides in the mitochondrion inner membrane. It catalyses the reaction 4 Fe(II)-[cytochrome c] + O2 + 8 H(+)(in) = 4 Fe(III)-[cytochrome c] + 2 H2O + 4 H(+)(out). In terms of biological role, component of the cytochrome c oxidase, the last enzyme in the mitochondrial electron transport chain which drives oxidative phosphorylation. The respiratory chain contains 3 multisubunit complexes succinate dehydrogenase (complex II, CII), ubiquinol-cytochrome c oxidoreductase (cytochrome b-c1 complex, complex III, CIII) and cytochrome c oxidase (complex IV, CIV), that cooperate to transfer electrons derived from NADH and succinate to molecular oxygen, creating an electrochemical gradient over the inner membrane that drives transmembrane transport and the ATP synthase. Cytochrome c oxidase is the component of the respiratory chain that catalyzes the reduction of oxygen to water. Electrons originating from reduced cytochrome c in the intermembrane space (IMS) are transferred via the dinuclear copper A center (CU(A)) of subunit 2 and heme A of subunit 1 to the active site in subunit 1, a binuclear center (BNC) formed by heme A3 and copper B (CU(B)). The BNC reduces molecular oxygen to 2 water molecules using 4 electrons from cytochrome c in the IMS and 4 protons from the mitochondrial matrix. This is Cytochrome c oxidase subunit 2 (MT-CO2) from Lycalopex vetulus (Hoary fox).